Consider the following 240-residue polypeptide: Small ribosomal subunit protein uS2 (240 aa).

Belongs to the universal ribosomal protein uS2 family.

The sequence is that of Small ribosomal subunit protein uS2 (rpsB) from Pasteurella multocida (strain Pm70).